A 910-amino-acid polypeptide reads, in one-letter code: DNA mismatch repair protein MutS (910 aa).

615–622 (GPNMAGKS) is an ATP binding site.

The protein belongs to the DNA mismatch repair MutS family.

In terms of biological role, this protein is involved in the repair of mismatches in DNA. It is possible that it carries out the mismatch recognition step. This protein has a weak ATPase activity. The protein is DNA mismatch repair protein MutS of Clostridium perfringens (strain ATCC 13124 / DSM 756 / JCM 1290 / NCIMB 6125 / NCTC 8237 / Type A).